Consider the following 34-residue polypeptide: Ornithine carbamoyltransferase, catabolic (34 aa).

The protein belongs to the aspartate/ornithine carbamoyltransferase superfamily. OTCase family. As to quaternary structure, probably nonameric or dodecameric.

The protein resides in the cytoplasm. It catalyses the reaction carbamoyl phosphate + L-ornithine = L-citrulline + phosphate + H(+). The protein operates within amino-acid degradation; L-arginine degradation via ADI pathway; carbamoyl phosphate from L-arginine: step 2/2. This Pseudomonas putida (Arthrobacter siderocapsulatus) protein is Ornithine carbamoyltransferase, catabolic (arcB).